The primary structure comprises 152 residues: Ribosomal RNA large subunit methyltransferase H (152 aa).

S-adenosyl-L-methionine contacts are provided by residues Leu-68, Gly-100, and 119–124; that span reads FGRMTW.

It belongs to the RNA methyltransferase RlmH family. In terms of assembly, homodimer.

It is found in the cytoplasm. It carries out the reaction pseudouridine(1915) in 23S rRNA + S-adenosyl-L-methionine = N(3)-methylpseudouridine(1915) in 23S rRNA + S-adenosyl-L-homocysteine + H(+). Functionally, specifically methylates the pseudouridine at position 1915 (m3Psi1915) in 23S rRNA. In Paramagnetospirillum magneticum (strain ATCC 700264 / AMB-1) (Magnetospirillum magneticum), this protein is Ribosomal RNA large subunit methyltransferase H.